Reading from the N-terminus, the 283-residue chain is MHLLQEPVNKLKFFHALVAGGVAGMVVDIALFPIDTVKTRLQSELGFWRAGGFRGIYKGLAPAAAGSAPTAALFFCTYECGKQFLSSVTQTKDSPYVHMAAASAAEVLACLIRVPVEIAKQRSQTLQGNKQSGLQILLRAYRTEGLKRGLYRGFGSTIMREIPFSLIQFPLWEYFKLQWTPLTGFDSTPFSVALCGAVAGGISAGLTTPLDVVKTRIMLAERESLNRRRSARRILHGIYLERGFSGLFAGFVPRVLWITLGGAFFFGFYDLTTRILGATSTDH.

3 Solcar repeats span residues L11 to F84, D93 to Q178, and S187 to I275. Helical transmembrane passes span F14–I34, G55–F75, M99–A119, R152–W172, F190–L210, and F248–F268.

The protein belongs to the mitochondrial carrier (TC 2.A.29) family.

It localises to the mitochondrion inner membrane. Its function is as follows. Mitochondrial solute carriers shuttle metabolites, nucleotides, and cofactors through the mitochondrial inner membrane. May mediate the transport of S-adenosylmethionine (SAM) into the mitochondria. The polypeptide is S-adenosylmethionine mitochondrial carrier protein homolog (Drosophila melanogaster (Fruit fly)).